Here is a 153-residue protein sequence, read N- to C-terminus: Large ribosomal subunit protein uL13 (153 aa).

The protein belongs to the universal ribosomal protein uL13 family. As to quaternary structure, part of the 50S ribosomal subunit.

Functionally, this protein is one of the early assembly proteins of the 50S ribosomal subunit, although it is not seen to bind rRNA by itself. It is important during the early stages of 50S assembly. The protein is Large ribosomal subunit protein uL13 of Xanthobacter autotrophicus (strain ATCC BAA-1158 / Py2).